The sequence spans 456 residues: Signal recognition particle receptor FtsY (456 aa).

Residues 1 to 26 show a composition bias toward basic and acidic residues; sequence MFDGLKKKLNRFRNDVEETAEEKAEA. A disordered region spans residues 1–163; the sequence is MFDGLKKKLN…DEDDSSGPGR (163 aa). Residues 27–39 are compositionally biased toward acidic residues; sequence AADEAESDADAEA. The segment covering 40–62 has biased composition (low complexity); it reads ESAPADTDNAAVEPEASEPAAAD. A compositionally biased stretch (acidic residues) spans 63-81; it reads PDADAVGDADAGSEADAVD. Low complexity predominate over residues 82-97; sequence AADAPADAESSSAAVE. A compositionally biased stretch (acidic residues) spans 112–134; the sequence is PDSEVDAGADTGDEPSGEPTADE. GTP is bound by residues 265–272, 347–351, and 405–408; these read GINGVGKT, DTAGR, and TKAD.

This sequence belongs to the GTP-binding SRP family. FtsY subfamily. Part of the signal recognition particle protein translocation system, which is composed of SRP and FtsY.

It is found in the cell membrane. Its subcellular location is the cytoplasm. The enzyme catalyses GTP + H2O = GDP + phosphate + H(+). In terms of biological role, involved in targeting and insertion of nascent membrane proteins into the cytoplasmic membrane. Acts as a receptor for the complex formed by the signal recognition particle (SRP) and the ribosome-nascent chain (RNC). This is Signal recognition particle receptor FtsY from Haloferax volcanii (strain ATCC 29605 / DSM 3757 / JCM 8879 / NBRC 14742 / NCIMB 2012 / VKM B-1768 / DS2) (Halobacterium volcanii).